The primary structure comprises 232 residues: Ribose-5-phosphate isomerase A (232 aa).

Residues 28–31 (TGST), 83–86 (DGAD), and 96–99 (KGGG) contribute to the substrate site. Residue Glu105 is the Proton acceptor of the active site. Lys123 is a substrate binding site.

The protein belongs to the ribose 5-phosphate isomerase family. In terms of assembly, homodimer.

It catalyses the reaction aldehydo-D-ribose 5-phosphate = D-ribulose 5-phosphate. It participates in carbohydrate degradation; pentose phosphate pathway; D-ribose 5-phosphate from D-ribulose 5-phosphate (non-oxidative stage): step 1/1. Its function is as follows. Catalyzes the reversible conversion of ribose-5-phosphate to ribulose 5-phosphate. This chain is Ribose-5-phosphate isomerase A, found in Rhizobium etli (strain CIAT 652).